Reading from the N-terminus, the 498-residue chain is ATP synthase subunit beta, chloroplastic (498 aa).

172–179 is an ATP binding site; it reads GGAGVGKT.

It belongs to the ATPase alpha/beta chains family. As to quaternary structure, F-type ATPases have 2 components, CF(1) - the catalytic core - and CF(0) - the membrane proton channel. CF(1) has five subunits: alpha(3), beta(3), gamma(1), delta(1), epsilon(1). CF(0) has four main subunits: a(1), b(1), b'(1) and c(9-12).

It localises to the plastid. The protein resides in the chloroplast thylakoid membrane. It catalyses the reaction ATP + H2O + 4 H(+)(in) = ADP + phosphate + 5 H(+)(out). Its function is as follows. Produces ATP from ADP in the presence of a proton gradient across the membrane. The catalytic sites are hosted primarily by the beta subunits. This chain is ATP synthase subunit beta, chloroplastic, found in Asarum canadense (Wild ginger).